We begin with the raw amino-acid sequence, 536 residues long: Phosphoenolpyruvate carboxykinase (ATP) (536 aa).

Substrate is bound by residues Arg61, Tyr195, and Lys201. ATP-binding positions include Lys201, His220, and 236–244 (GLSGTGKTT). Mn(2+) is bound by residues Lys201 and His220. Mn(2+) is bound at residue Asp257. Residues Glu285, Arg322, and Thr447 each coordinate ATP. Residue Arg322 coordinates substrate.

It belongs to the phosphoenolpyruvate carboxykinase (ATP) family. Mn(2+) serves as cofactor.

It is found in the cytoplasm. It catalyses the reaction oxaloacetate + ATP = phosphoenolpyruvate + ADP + CO2. Its pathway is carbohydrate biosynthesis; gluconeogenesis. Its function is as follows. Involved in the gluconeogenesis. Catalyzes the conversion of oxaloacetate (OAA) to phosphoenolpyruvate (PEP) through direct phosphoryl transfer between the nucleoside triphosphate and OAA. This chain is Phosphoenolpyruvate carboxykinase (ATP), found in Rhizobium johnstonii (strain DSM 114642 / LMG 32736 / 3841) (Rhizobium leguminosarum bv. viciae).